The following is a 371-amino-acid chain: MASLLTKPKPVFLCSPSLSPRTLNTATPSLNFTRISFTHHQKLAPFKPPSLVVAFSEKGLKRDVTTAAAATEGDYRRIMLSDVLVKKKEKVVWWEREWKAMDFGAVAVVLSMHLLSLLAPFQFNWRAVSVAFGLYIVTGLLGITLSFHRNLSHKAFKLPKWLEYLFAYCGAQALQGNPIDWVSTHRYHHQFCDSDRDPHSPLDGFWFSHMNWMFDTNTITQRCGEPNNVGDLEKQPFYRFLRTTYILHPLALAVALYAMGGFPFIVWGMGVRIVWVYHITWLVNSACHVWGKQAWNTGDLSKNNWWVAALAFGEGWHNNHHAFEFSARHGLEWWQLDMTWYVVKFLQAIGLATDVKLPSEAQKQRMAFTSD.

The N-terminal 67 residues, 1–67, are a transit peptide targeting the chloroplast; the sequence is MASLLTKPKP…KGLKRDVTTA (67 aa). The next 2 helical transmembrane spans lie at 103–123 and 127–147; these read FGAV…PFQF and AVSV…TLSF. The Histidine box-1 motif lies at 148 to 153; that stretch reads HRNLSH. Positions 185-189 match the Histidine box-2 motif; the sequence is HRYHH. The chain crosses the membrane as a helical span at residues 251-271; that stretch reads ALAVALYAMGGFPFIVWGMGV. The Histidine box-3 motif lies at 317 to 321; the sequence is HNNHH.

Belongs to the fatty acid desaturase type 1 family. It depends on Fe(2+) as a cofactor. As to expression, highly expressed in young leaves. Low expression in roots.

It localises to the plastid. The protein resides in the chloroplast membrane. It carries out the reaction a 1-acyl-2-hexadecanoyl-glycerolipid + 2 reduced [2Fe-2S]-[ferredoxin] + O2 + 2 H(+) = a 1-acyl-2-[(7Z)-hexadecenoyl]-glycerolipid + 2 oxidized [2Fe-2S]-[ferredoxin] + 2 H2O. It participates in lipid metabolism; oxylipin biosynthesis. It functions in the pathway lipid metabolism; polyunsaturated fatty acid biosynthesis. Its function is as follows. Fatty acid desaturase involved in the first desaturation step leading to the formation of hexadeca 7,10,13-trienoic acid (16:3(7Z,10Z,13Z)), the major functional components of thylakoid membranes. Required for chloroplast biogenesis at low temperature. Also indirectly involved in the production of the oxylipin dinor-oxo-phyto-dienoic acid implicated in wound signaling. In Arabidopsis thaliana (Mouse-ear cress), this protein is Palmitoyl-monogalactosyldiacylglycerol delta-7 desaturase, chloroplastic.